We begin with the raw amino-acid sequence, 264 residues long: 3-methyl-2-oxobutanoate hydroxymethyltransferase (264 aa).

Mg(2+)-binding residues include Asp-45 and Asp-84. 3-methyl-2-oxobutanoate-binding positions include 45-46, Asp-84, and Lys-112; that span reads DS. Mg(2+) is bound at residue Glu-114. The active-site Proton acceptor is the Glu-181.

It belongs to the PanB family. In terms of assembly, homodecamer; pentamer of dimers. The cofactor is Mg(2+).

It is found in the cytoplasm. It carries out the reaction 3-methyl-2-oxobutanoate + (6R)-5,10-methylene-5,6,7,8-tetrahydrofolate + H2O = 2-dehydropantoate + (6S)-5,6,7,8-tetrahydrofolate. It participates in cofactor biosynthesis; (R)-pantothenate biosynthesis; (R)-pantoate from 3-methyl-2-oxobutanoate: step 1/2. Functionally, catalyzes the reversible reaction in which hydroxymethyl group from 5,10-methylenetetrahydrofolate is transferred onto alpha-ketoisovalerate to form ketopantoate. The chain is 3-methyl-2-oxobutanoate hydroxymethyltransferase from Aeromonas hydrophila subsp. hydrophila (strain ATCC 7966 / DSM 30187 / BCRC 13018 / CCUG 14551 / JCM 1027 / KCTC 2358 / NCIMB 9240 / NCTC 8049).